The sequence spans 153 residues: Transcriptional repressor NrdR (153 aa).

The segment at 3-33 (CPYCNYKESKVIDSRHTDLKSIRRRRECESC) is a zinc-finger region. One can recognise an ATP-cone domain in the interval 48–138 (LMVIKKDNSR…VYRQFKDINT (91 aa)).

Belongs to the NrdR family. It depends on Zn(2+) as a cofactor.

Functionally, negatively regulates transcription of bacterial ribonucleotide reductase nrd genes and operons by binding to NrdR-boxes. The polypeptide is Transcriptional repressor NrdR (Clostridioides difficile (strain 630) (Peptoclostridium difficile)).